The following is a 155-amino-acid chain: Small ribosomal subunit protein uS7cz/uS7cy (155 aa).

Belongs to the universal ribosomal protein uS7 family. As to quaternary structure, part of the 30S ribosomal subunit.

Its subcellular location is the plastid. The protein localises to the chloroplast. Functionally, one of the primary rRNA binding proteins, it binds directly to 16S rRNA where it nucleates assembly of the head domain of the 30S subunit. The sequence is that of Small ribosomal subunit protein uS7cz/uS7cy (rps7-A) from Citrus sinensis (Sweet orange).